Here is a 131-residue protein sequence, read N- to C-terminus: Small ribosomal subunit protein uS11 (131 aa).

It belongs to the universal ribosomal protein uS11 family. In terms of assembly, part of the 30S ribosomal subunit. Interacts with proteins S7 and S18. Binds to IF-3.

Functionally, located on the platform of the 30S subunit, it bridges several disparate RNA helices of the 16S rRNA. Forms part of the Shine-Dalgarno cleft in the 70S ribosome. The chain is Small ribosomal subunit protein uS11 from Geobacter metallireducens (strain ATCC 53774 / DSM 7210 / GS-15).